The primary structure comprises 148 residues: Nucleoside diphosphate kinase (148 aa).

Residues Lys-10, Phe-58, Arg-86, Thr-92, Arg-103, and Asn-113 each contribute to the ATP site. Catalysis depends on His-116, which acts as the Pros-phosphohistidine intermediate.

Belongs to the NDK family. Mg(2+) is required as a cofactor.

The protein localises to the cytoplasm. It catalyses the reaction a 2'-deoxyribonucleoside 5'-diphosphate + ATP = a 2'-deoxyribonucleoside 5'-triphosphate + ADP. The enzyme catalyses a ribonucleoside 5'-diphosphate + ATP = a ribonucleoside 5'-triphosphate + ADP. Its function is as follows. Major role in the synthesis of nucleoside triphosphates other than ATP. The ATP gamma phosphate is transferred to the NDP beta phosphate via a ping-pong mechanism, using a phosphorylated active-site intermediate. This is Nucleoside diphosphate kinase from Thermoplasma acidophilum (strain ATCC 25905 / DSM 1728 / JCM 9062 / NBRC 15155 / AMRC-C165).